Here is a 542-residue protein sequence, read N- to C-terminus: Probable spastin homolog spas-1 (542 aa).

Residues arginine 29–glutamate 66 are a coiled coil. The disordered stretch occupies residues alanine 131–glutamine 177. Residues glycine 135–serine 169 are compositionally biased toward basic and acidic residues. ATP is bound at residue glycine 309–threonine 316.

Belongs to the AAA ATPase family. Spastin subfamily. Homohexamer. The homohexamer is stabilized by ATP-binding. The homohexamer may adopt a ring conformation through which microtubules pass prior to being severed. Interacts with microtubules.

The protein resides in the cytoplasm. Its subcellular location is the cytoskeleton. The protein localises to the perinuclear region. It carries out the reaction n ATP + n H2O + a microtubule = n ADP + n phosphate + (n+1) alpha/beta tubulin heterodimers.. In terms of biological role, severs microtubules, probably in an ATP-dependent fashion. The sequence is that of Probable spastin homolog spas-1 (spas-1) from Caenorhabditis briggsae.